Here is an 87-residue protein sequence, read N- to C-terminus: Serine rich endogenous peptide 17 (87 aa).

An N-terminal signal peptide occupies residues 1-28 (MTGKAPFFVILIAALLLLSSFFFGEVKA). The disordered stretch occupies residues 32-87 (KQPKHRKLGNREGDENRSNEIVVQMKARVKRSKSKRGPQKKEPYKKPPCSPPTHPA). Positions 40 to 49 (GNREGDENRS) are enriched in basic and acidic residues. Positions 51 to 71 (EIVVQMKARVKRSKSKRGPQK) match the SCOOP motif motif. Residues 58 to 69 (ARVKRSKSKRGP) show a composition bias toward basic residues. A SxS motif essential for MIK2 binding motif is present at residues 63–65 (SKS). Pro residues predominate over residues 77–87 (KPPCSPPTHPA).

It belongs to the serine rich endogenous peptide (SCOOP) phytocytokine family. As to quaternary structure, interacts with MIK2 (via extracellular leucine-rich repeat domain); this interaction triggers the formation of complex between MIK2 and the BAK1/SERK3 and SERK4 coreceptors, and subsequent BAK1 activation by phosphorylation.

Its subcellular location is the cell membrane. The protein localises to the secreted. It localises to the extracellular space. The protein resides in the apoplast. In terms of biological role, brassicaceae-specific phytocytokine (plant endogenous peptide released into the apoplast) perceived by MIK2 in a BAK1/SERK3 and SERK4 coreceptors-dependent manner, that modulates various physiological and antimicrobial processes including growth prevention and reactive oxygen species (ROS) response regulation. The chain is Serine rich endogenous peptide 17 from Arabidopsis thaliana (Mouse-ear cress).